Here is a 529-residue protein sequence, read N- to C-terminus: Probable E3 ubiquitin-protein ligase MGRN1 (529 aa).

The segment at 275 to 314 (ECVVCLSDLRDTLILPCRHLCLCNACADTLRYQANNCPIC) adopts an RING-type zinc-finger fold. 2 disordered regions span residues 341–362 (SPVLSQSSDHTEHSNADNIPPG) and 396–529 (EMGD…VEEC). Polar residues-rich tracts occupy residues 449–463 (AQPQSVLPCSLSPSE) and 477–487 (NSGSESRSLGV). Residues 501–511 (SSLSQSESDPS) are compositionally biased toward low complexity. The segment covering 520–529 (ESWSTAVEEC) has biased composition (polar residues).

Autoubiquitinated in vitro.

The catalysed reaction is S-ubiquitinyl-[E2 ubiquitin-conjugating enzyme]-L-cysteine + [acceptor protein]-L-lysine = [E2 ubiquitin-conjugating enzyme]-L-cysteine + N(6)-ubiquitinyl-[acceptor protein]-L-lysine.. It participates in protein modification; protein ubiquitination. Its function is as follows. E3 ubiquitin-protein ligase. Also acts as a negative regulator of hedgehog signaling. The polypeptide is Probable E3 ubiquitin-protein ligase MGRN1 (mgrn1) (Danio rerio (Zebrafish)).